The primary structure comprises 375 residues: S-adenosylmethionine:tRNA ribosyltransferase-isomerase (375 aa).

Belongs to the QueA family. As to quaternary structure, monomer.

The protein localises to the cytoplasm. The enzyme catalyses 7-aminomethyl-7-carbaguanosine(34) in tRNA + S-adenosyl-L-methionine = epoxyqueuosine(34) in tRNA + adenine + L-methionine + 2 H(+). It functions in the pathway tRNA modification; tRNA-queuosine biosynthesis. Its function is as follows. Transfers and isomerizes the ribose moiety from AdoMet to the 7-aminomethyl group of 7-deazaguanine (preQ1-tRNA) to give epoxyqueuosine (oQ-tRNA). This chain is S-adenosylmethionine:tRNA ribosyltransferase-isomerase, found in Rickettsia typhi (strain ATCC VR-144 / Wilmington).